A 122-amino-acid chain; its full sequence is Large ribosomal subunit protein uL14 (122 aa).

Belongs to the universal ribosomal protein uL14 family. Part of the 50S ribosomal subunit. Forms a cluster with proteins L3 and L19. In the 70S ribosome, L14 and L19 interact and together make contacts with the 16S rRNA in bridges B5 and B8.

Binds to 23S rRNA. Forms part of two intersubunit bridges in the 70S ribosome. In Endomicrobium trichonymphae, this protein is Large ribosomal subunit protein uL14.